Here is a 270-residue protein sequence, read N- to C-terminus: 4-hydroxy-tetrahydrodipicolinate reductase (270 aa).

Residues 8–13, aspartate 34, 102–104, and 128–131 contribute to the NAD(+) site; these read GALGRM, GTT, and SQNY. Residue histidine 160 is the Proton donor/acceptor of the active site. Histidine 161 provides a ligand contact to (S)-2,3,4,5-tetrahydrodipicolinate. The Proton donor role is filled by lysine 164. 170–171 contacts (S)-2,3,4,5-tetrahydrodipicolinate; sequence GT.

This sequence belongs to the DapB family.

Its subcellular location is the cytoplasm. The enzyme catalyses (S)-2,3,4,5-tetrahydrodipicolinate + NAD(+) + H2O = (2S,4S)-4-hydroxy-2,3,4,5-tetrahydrodipicolinate + NADH + H(+). The catalysed reaction is (S)-2,3,4,5-tetrahydrodipicolinate + NADP(+) + H2O = (2S,4S)-4-hydroxy-2,3,4,5-tetrahydrodipicolinate + NADPH + H(+). Its pathway is amino-acid biosynthesis; L-lysine biosynthesis via DAP pathway; (S)-tetrahydrodipicolinate from L-aspartate: step 4/4. In terms of biological role, catalyzes the conversion of 4-hydroxy-tetrahydrodipicolinate (HTPA) to tetrahydrodipicolinate. The protein is 4-hydroxy-tetrahydrodipicolinate reductase of Methanococcus maripaludis (strain C6 / ATCC BAA-1332).